Here is a 1902-residue protein sequence, read N- to C-terminus: PII-type proteinase (1902 aa).

The N-terminal stretch at Met1 to Ala33 is a signal peptide. A propeptide spanning residues Ala34–Thr187 is cleaved from the precursor. The region spanning Ala191–Ile697 is the Peptidase S8 domain. Residues Asp217, His281, and Ser620 each act as charge relay system in the active site. The span at Lys1793 to Ser1805 shows a compositional bias: low complexity. The disordered stretch occupies residues Lys1793–Glu1872. Positions Leu1867–Ala1871 match the LPXTG sorting signal motif. A Pentaglycyl murein peptidoglycan amidated threonine modification is found at Thr1870. Positions Ala1871–Glu1902 are cleaved as a propeptide — removed by sortase.

It belongs to the peptidase S8 family.

It localises to the secreted. The protein resides in the cell wall. The catalysed reaction is Endopeptidase activity with very broad specificity, although some subsite preference have been noted, e.g. large hydrophobic residues in the P1 and P4 positions, and Pro in the P2 position. Best known for its action on caseins, although it has been shown to hydrolyze hemoglobin and oxidized insulin B-chain.. Functionally, protease which breaks down milk proteins during the growth of the bacteria on milk. The chain is PII-type proteinase (prtP) from Lacticaseibacillus paracasei (Lactobacillus paracasei).